Reading from the N-terminus, the 233-residue chain is Large ribosomal subunit protein uL1 (233 aa).

Belongs to the universal ribosomal protein uL1 family. In terms of assembly, part of the 50S ribosomal subunit.

Its function is as follows. Binds directly to 23S rRNA. The L1 stalk is quite mobile in the ribosome, and is involved in E site tRNA release. In terms of biological role, protein L1 is also a translational repressor protein, it controls the translation of the L11 operon by binding to its mRNA. In Shewanella halifaxensis (strain HAW-EB4), this protein is Large ribosomal subunit protein uL1.